A 276-amino-acid polypeptide reads, in one-letter code: Large ribosomal subunit protein uL2 (276 aa).

Residues 224-276 (AMNPIDHPHGGGEGKTSGGRNPVTPWGVPTKGKKTRKRNKSSNKYIKRVSDKG) are disordered. Over residues 254–270 (KGKKTRKRNKSSNKYIK) the composition is skewed to basic residues.

This sequence belongs to the universal ribosomal protein uL2 family. As to quaternary structure, part of the 50S ribosomal subunit. Forms a bridge to the 30S subunit in the 70S ribosome.

In terms of biological role, one of the primary rRNA binding proteins. Required for association of the 30S and 50S subunits to form the 70S ribosome, for tRNA binding and peptide bond formation. It has been suggested to have peptidyltransferase activity; this is somewhat controversial. Makes several contacts with the 16S rRNA in the 70S ribosome. The sequence is that of Large ribosomal subunit protein uL2 from Ehrlichia canis (strain Jake).